The primary structure comprises 190 residues: UPF0301 protein Pden_0436 (190 aa).

This sequence belongs to the UPF0301 (AlgH) family.

The sequence is that of UPF0301 protein Pden_0436 from Paracoccus denitrificans (strain Pd 1222).